The following is a 46-amino-acid chain: Mu-segestritoxin-Sf1f (46 aa).

4 disulfides stabilise this stretch: Cys-3-Cys-19, Cys-10-Cys-22, Cys-18-Cys-42, and Cys-24-Cys-40. Residues 31 to 33 are keys region for toxin activity; sequence RPW.

Belongs to the neurotoxin 16 (SFI) family. In terms of tissue distribution, expressed by the venom gland.

It localises to the secreted. Functionally, insecticidal toxin. It inhibits insect voltage-gated sodium channels (Nav) by partially blocking the channel pore in DUM neurons from the American cockroach, not by acting as a gating modifier. The inhibition is only partially reversible after prolonged washout. In vivo, the toxin causes flaccid paralysis followed by death when injected into Heliothis virescens larvae. It also causes uncoordinated movements followed by full paralysis to sheep blowflies (Lucilia cuprina). When the toxin is fused to snowdrop lectin, it is orally active against larvae of the tomato moth (Laconobia oleracea), the rice brown planthopper (Nilaparvata lugens), and the peach-potato aphid (Myzus persicae). In Segestria florentina (Tube-web spider), this protein is Mu-segestritoxin-Sf1f.